Here is a 517-residue protein sequence, read N- to C-terminus: Endoglycoceramidase (517 aa).

The N-terminal stretch at 1–17 (MISVALIILFLAKVISG) is a signal peptide. N-linked (GlcNAc...) asparagine glycosylation occurs at Asn-99. The active-site Proton donor is the Glu-230. N-linked (GlcNAc...) asparagine glycans are attached at residues Asn-298, Asn-380, and Asn-393.

This sequence belongs to the glycosyl hydrolase 5 (cellulase A) family. Expressed uniformly in digestive cells, tentacles and peduncle regions suggesting expression in the endoderm throughout the whole body (at protein level).

Its subcellular location is the secreted. The enzyme catalyses an oligoglycosyl-(1-&gt;4)-beta-D-glucosyl-(1&lt;-&gt;1)-ceramide + H2O = an oligoglycosyl-(1-&gt;4)-D-glucose + an N-acyl-sphingoid base. Cu(2+), zinc, manganese, calcium, magnesium and EDTA have no significant effects on enzyme activity. Enzyme requires presence of detergents such as Triton X-100 and Lubrol PX for the hydrolysis of glycosphingolipids. Taurodeoxycholate strongly inhibits the enzyme activity. Functionally, hydrolysis of the glycosidic linkage between oligosaccharides and ceramides of glycosphingolipids, optimal substrates appear to be the glycosphingolipids with a gangliotetraose structure. In Hydra vulgaris (Hydra), this protein is Endoglycoceramidase.